The sequence spans 337 residues: MRVLGIETSCDETGIAIYDDEKGLLANQLYSQVKLHADYGGVVPELASRDHVRKTVPLIQAALKESGLTAKDIDAVAYTAGPGLVGALLVGATVGRSLAFAWDVPAIPVHHMEGHLLAPMLEDNPPEFPFVALLVSGGHTQLISVTGIGQYELLGESIDDAAGEAFDKTAKLLGLDYPGGPLLSKMAAQGTAGRFVFPRPMTDRPGLDFSFSGLKTFAANTIRDNGTDDQTRADIARAFEDAVVDTLMIKCKRALDQTGFKRLVMAGGVSANRTLRAKLAEMMKKRRGEVFYARPEFCTDNGAMIAYAGMVRFKAGATADLGVSVRPRWPLAELPAA.

Fe cation contacts are provided by histidine 111 and histidine 115. Substrate is bound by residues 134–138, aspartate 167, glycine 180, and asparagine 272; that span reads LVSGG. Aspartate 300 is a Fe cation binding site.

The protein belongs to the KAE1 / TsaD family. Fe(2+) is required as a cofactor.

The protein localises to the cytoplasm. It catalyses the reaction L-threonylcarbamoyladenylate + adenosine(37) in tRNA = N(6)-L-threonylcarbamoyladenosine(37) in tRNA + AMP + H(+). Functionally, required for the formation of a threonylcarbamoyl group on adenosine at position 37 (t(6)A37) in tRNAs that read codons beginning with adenine. Is involved in the transfer of the threonylcarbamoyl moiety of threonylcarbamoyl-AMP (TC-AMP) to the N6 group of A37, together with TsaE and TsaB. TsaD likely plays a direct catalytic role in this reaction. This is tRNA N6-adenosine threonylcarbamoyltransferase from Escherichia coli (strain K12 / MC4100 / BW2952).